Consider the following 91-residue polypeptide: ATP-dependent Clp protease adapter protein ClpS (91 aa).

Belongs to the ClpS family. As to quaternary structure, binds to the N-terminal domain of the chaperone ClpA.

In terms of biological role, involved in the modulation of the specificity of the ClpAP-mediated ATP-dependent protein degradation. The sequence is that of ATP-dependent Clp protease adapter protein ClpS from Synechococcus sp. (strain ATCC 27144 / PCC 6301 / SAUG 1402/1) (Anacystis nidulans).